The primary structure comprises 473 residues: Notchless protein homolog (473 aa).

Residues 9-91 form a ubiquitin-like (UBL) domain region; it reads GKTVMCLLTD…VLTIVYQQQA (83 aa). WD repeat units follow at residues 107–146, 149–188, 192–236, 239–277, 313–354, 358–399, 400–439, and 442–473; these read GHAE…PLFT, GHKN…LEGS, GHKK…SIIC, GHTL…LIRE, EKQK…QPKK, GHQQ…TVFR, GHVG…LKQD, and GHAD…LWKG. Residues 417–432 carry the DWD box motif; sequence LLSGSKDSTLKIWEIR.

This sequence belongs to the NLE1/RSA4 family. Associates with the pre-60S ribosomal particle. As to expression, constitutively and ubiquitously expressed.

It localises to the nucleus. The protein localises to the nucleolus. Functionally, required for female gametophyte development. This chain is Notchless protein homolog, found in Arabidopsis thaliana (Mouse-ear cress).